Reading from the N-terminus, the 415-residue chain is Adipocyte plasma membrane-associated protein (415 aa).

The segment at 1-29 (MSEADGLRQRRPLRPQVVTDDGQVPEVKE) is disordered. Ser2 carries the post-translational modification N-acetylserine. Over 2–39 (SEADGLRQRRPLRPQVVTDDGQVPEVKEGSSFSGRVFR) the chain is Cytoplasmic. Phosphothreonine is present on Thr19. The chain crosses the membrane as a helical; Signal-anchor for type II membrane protein span at residues 40–60 (MTFLMLAVSLAIPLLGAMMLL). Residues 61–415 (ESPIDPQSFS…FICRLSLQSI (355 aa)) are Extracellular-facing. Asn159 carries an N-linked (GlcNAc...) asparagine glycan.

Belongs to the strictosidine synthase family. In terms of processing, glycosylated in vitro. Strongly expressed in adipose tissue. Highly expressed in liver, heart, and kidney. Expressed at intermediate level in brain and lung. Weakly expressed in spleen, skeletal muscle and testis.

It is found in the membrane. Functionally, exhibits strong arylesterase activity with beta-naphthyl acetate and phenyl acetate. May play a role in adipocyte differentiation. The polypeptide is Adipocyte plasma membrane-associated protein (Apmap) (Mus musculus (Mouse)).